The chain runs to 420 residues: MDTPARLNDLQRTTLAIVLAGGRGTRLGPLTNKRVKPAVHFGGKYRIIDFALSNCLNSGIRRIAVVTQYKAHSLLRHLQRGWSFLRGEMGEFIDLWPAQQRVEGAHWYRGTADAVFQNLDIIRSIRPKYVVVLAGDHIYKMDYTRMIADHAESGADCTVGCIEVPRMEAVAFGVMHVDANRRVTDFLEKPADPPCIPGRPDTALASMGIYVFSADYLYSLLEENISTIDTDHDFGKDILPRVVTQGTAIAHPFSMSCVSSDPNVEPYWRDVGTIDAYWAANLDLASTIPTLDLYDRNWPIWTYQEQLPPAKFVRDMKGLQGSGNNLIVCGGCVISGSQISRSVLSSNVKVSSFCNINEAVLLPQVTVGASCRLQKVVIDRGCAIPEGTVIGEDPVSDAERFYRTDDGVVLVTPEALRQKV.

Residues Tyr-108, Gly-173, 188 to 189, and Ser-206 contribute to the alpha-D-glucose 1-phosphate site; that span reads EK.

The protein belongs to the bacterial/plant glucose-1-phosphate adenylyltransferase family. In terms of assembly, homotetramer.

The enzyme catalyses alpha-D-glucose 1-phosphate + ATP + H(+) = ADP-alpha-D-glucose + diphosphate. It participates in glycan biosynthesis; glycogen biosynthesis. Functionally, involved in the biosynthesis of ADP-glucose, a building block required for the elongation reactions to produce glycogen. Catalyzes the reaction between ATP and alpha-D-glucose 1-phosphate (G1P) to produce pyrophosphate and ADP-Glc. This Paraburkholderia phytofirmans (strain DSM 17436 / LMG 22146 / PsJN) (Burkholderia phytofirmans) protein is Glucose-1-phosphate adenylyltransferase.